A 193-amino-acid polypeptide reads, in one-letter code: Protein GrpE (193 aa).

Residues 1–22 (MDPKEKEKMAEELNVEETKDTA) show a composition bias toward basic and acidic residues. Residues 1–45 (MDPKEKEKMAEELNVEETKDTAEEQPQDDQAEEAAPLTHEEQLEK) form a disordered region. The segment covering 23-32 (EEQPQDDQAE) has biased composition (acidic residues).

It belongs to the GrpE family. Homodimer.

It is found in the cytoplasm. Participates actively in the response to hyperosmotic and heat shock by preventing the aggregation of stress-denatured proteins, in association with DnaK and GrpE. It is the nucleotide exchange factor for DnaK and may function as a thermosensor. Unfolded proteins bind initially to DnaJ; upon interaction with the DnaJ-bound protein, DnaK hydrolyzes its bound ATP, resulting in the formation of a stable complex. GrpE releases ADP from DnaK; ATP binding to DnaK triggers the release of the substrate protein, thus completing the reaction cycle. Several rounds of ATP-dependent interactions between DnaJ, DnaK and GrpE are required for fully efficient folding. The sequence is that of Protein GrpE from Bacteroides thetaiotaomicron (strain ATCC 29148 / DSM 2079 / JCM 5827 / CCUG 10774 / NCTC 10582 / VPI-5482 / E50).